A 1056-amino-acid polypeptide reads, in one-letter code: Carbamoyl phosphate synthase large chain (1056 aa).

The segment at 1–399 is carboxyphosphate synthetic domain; sequence MKIDVSKVIV…AFQKAIRMLD (399 aa). 12 residues coordinate ATP: R127, R167, G173, G174, K206, L208, E213, G239, V240, H241, Q282, and E296. Residues 131 to 325 form the ATP-grasp 1 domain; that stretch reads QKTMKKVGLP…LAYIATKLAI (195 aa). Q282, E296, and N298 together coordinate Mg(2+). The Mn(2+) site is built by Q282, E296, and N298. The interval 400-536 is oligomerization domain; the sequence is IGDELIGKYY…VTYDGVENDI (137 aa). A carbamoyl phosphate synthetic domain region spans residues 537–919; it reads PKPKKPSILV…LKSWLSVKPN (383 aa). Residues 661 to 849 form the ATP-grasp 2 domain; that stretch reads SKLLEKLGIP…LMELSAQAVL (189 aa). Residues R697, K736, I738, E742, G766, V767, H768, S769, Q809, and E820 each coordinate ATP. Residues Q809, E820, and N822 each coordinate Mg(2+). Positions 809, 820, and 822 each coordinate Mn(2+). Positions 915–1043 constitute an MGS-like domain; sequence SVKPNELPKT…REYWIRKIEE (129 aa). The allosteric domain stretch occupies residues 920 to 1056; that stretch reads ELPKTSALIY…EYAASVVLRR (137 aa).

Belongs to the CarB family. In terms of assembly, composed of two chains; the small (or glutamine) chain promotes the hydrolysis of glutamine to ammonia, which is used by the large (or ammonia) chain to synthesize carbamoyl phosphate. Tetramer of heterodimers (alpha,beta)4. Mg(2+) is required as a cofactor. The cofactor is Mn(2+).

It catalyses the reaction hydrogencarbonate + L-glutamine + 2 ATP + H2O = carbamoyl phosphate + L-glutamate + 2 ADP + phosphate + 2 H(+). The enzyme catalyses hydrogencarbonate + NH4(+) + 2 ATP = carbamoyl phosphate + 2 ADP + phosphate + 2 H(+). It participates in amino-acid biosynthesis; L-arginine biosynthesis; carbamoyl phosphate from bicarbonate: step 1/1. Its pathway is pyrimidine metabolism; UMP biosynthesis via de novo pathway; (S)-dihydroorotate from bicarbonate: step 1/3. Functionally, large subunit of the glutamine-dependent carbamoyl phosphate synthetase (CPSase). CPSase catalyzes the formation of carbamoyl phosphate from the ammonia moiety of glutamine, carbonate, and phosphate donated by ATP, constituting the first step of 2 biosynthetic pathways, one leading to arginine and/or urea and the other to pyrimidine nucleotides. The large subunit (synthetase) binds the substrates ammonia (free or transferred from glutamine from the small subunit), hydrogencarbonate and ATP and carries out an ATP-coupled ligase reaction, activating hydrogencarbonate by forming carboxy phosphate which reacts with ammonia to form carbamoyl phosphate. The chain is Carbamoyl phosphate synthase large chain from Pyrococcus furiosus (strain ATCC 43587 / DSM 3638 / JCM 8422 / Vc1).